The sequence spans 297 residues: Cytosolic Fe-S cluster assembly factor CFD1 (297 aa).

ATP is bound at residue 15-22 (GKGGVGKS). Residues Cys216 and Cys219 each contribute to the [4Fe-4S] cluster site.

It belongs to the Mrp/NBP35 ATP-binding proteins family. NUBP2/CFD1 subfamily. As to quaternary structure, heterotetramer of 2 NBP35 and 2 CFD1 chains. The cofactor is [4Fe-4S] cluster.

Its subcellular location is the cytoplasm. Its function is as follows. Component of the cytosolic iron-sulfur (Fe/S) protein assembly (CIA) machinery. Required for maturation of extramitochondrial Fe-S proteins. The NBP35-CFD1 heterotetramer forms a Fe-S scaffold complex, mediating the de novo assembly of an Fe-S cluster and its transfer to target apoproteins. This chain is Cytosolic Fe-S cluster assembly factor CFD1, found in Phaeosphaeria nodorum (strain SN15 / ATCC MYA-4574 / FGSC 10173) (Glume blotch fungus).